Reading from the N-terminus, the 87-residue chain is Small ribosomal subunit protein bS20 (87 aa).

Residues 1–11 (MANIKSKKKRI) are compositionally biased toward basic residues. Residues 1–25 (MANIKSKKKRIKTNEKARQRNKAIR) form a disordered region.

Belongs to the bacterial ribosomal protein bS20 family.

Its function is as follows. Binds directly to 16S ribosomal RNA. In Corynebacterium kroppenstedtii (strain DSM 44385 / JCM 11950 / CIP 105744 / CCUG 35717), this protein is Small ribosomal subunit protein bS20.